We begin with the raw amino-acid sequence, 462 residues long: Siroheme synthase (462 aa).

Residues 1–201 (MQFLPLFHKL…GKPEEGERLL (201 aa)) are precorrin-2 dehydrogenase /sirohydrochlorin ferrochelatase. Residues 22-23 (EV) and 43-44 (PE) each bind NAD(+). Ser126 carries the phosphoserine modification. Residues 214-462 (GEVYLVGAGP…AWFEGAQGSL (249 aa)) are uroporphyrinogen-III C-methyltransferase. Pro223 contacts S-adenosyl-L-methionine. The Proton acceptor role is filled by Asp246. Lys268 serves as the catalytic Proton donor. S-adenosyl-L-methionine-binding positions include 299–301 (GGD), Ile304, 329–330 (TA), Met381, and Gly410.

In the N-terminal section; belongs to the precorrin-2 dehydrogenase / sirohydrochlorin ferrochelatase family. The protein in the C-terminal section; belongs to the precorrin methyltransferase family.

The enzyme catalyses uroporphyrinogen III + 2 S-adenosyl-L-methionine = precorrin-2 + 2 S-adenosyl-L-homocysteine + H(+). It catalyses the reaction precorrin-2 + NAD(+) = sirohydrochlorin + NADH + 2 H(+). It carries out the reaction siroheme + 2 H(+) = sirohydrochlorin + Fe(2+). The protein operates within cofactor biosynthesis; adenosylcobalamin biosynthesis; precorrin-2 from uroporphyrinogen III: step 1/1. It participates in cofactor biosynthesis; adenosylcobalamin biosynthesis; sirohydrochlorin from precorrin-2: step 1/1. Its pathway is porphyrin-containing compound metabolism; siroheme biosynthesis; precorrin-2 from uroporphyrinogen III: step 1/1. It functions in the pathway porphyrin-containing compound metabolism; siroheme biosynthesis; siroheme from sirohydrochlorin: step 1/1. The protein operates within porphyrin-containing compound metabolism; siroheme biosynthesis; sirohydrochlorin from precorrin-2: step 1/1. In terms of biological role, multifunctional enzyme that catalyzes the SAM-dependent methylations of uroporphyrinogen III at position C-2 and C-7 to form precorrin-2 via precorrin-1. Then it catalyzes the NAD-dependent ring dehydrogenation of precorrin-2 to yield sirohydrochlorin. Finally, it catalyzes the ferrochelation of sirohydrochlorin to yield siroheme. The chain is Siroheme synthase from Ectopseudomonas mendocina (strain ymp) (Pseudomonas mendocina).